A 517-amino-acid polypeptide reads, in one-letter code: MTALTLSTAAAPGLRADAIVIGVAKGAGGPSVAPGAEAVDKAYDGRLAAVLETLGASGAEGEVTKLPAPSGFKAPVVVAVGLGAEPEKDAGFDPEALRRAAGAAARALAGAKKAAFALPLAEAADAGVVAEGLLLGAYSFDAYKASAKEAKEAKGAKAKANGNGKAPLAEAALLGGKPRDKAYKAAIERATAVAEELNRARDLVNTPPNDLDPEAFAAVAQAAAKEHGIKVQVLDEKALVKGGYGGILGVGAGSASGPRLVKLSYTSPKAKKSLAFVGKGITYDSGGISLKPAGHNETMKCDMAGAAAVFAAVVAAARLGLEVNVTGWLALAENMPSGSATRPGDVLRMYSGKTVEVLNTDAEGRLVLADALWAASQDEPDAIIDVATLTGAMMLALGSRTYGIMANDDAFRSAVHEAAEESGEPAWPMPLPEHLRKGMDSPTADIANMGERMGGGLVAGLFLREFVGEGITWAHLDIAGPAFNEGGPFGYTPKGGTGTAVRTLVRVAELAAAGELG.

Residues lysine 279 and aspartate 284 each contribute to the Mn(2+) site. Lysine 291 is an active-site residue. 3 residues coordinate Mn(2+): aspartate 302, aspartate 361, and glutamate 363. The active site involves arginine 365.

The protein belongs to the peptidase M17 family. The cofactor is Mn(2+).

It localises to the cytoplasm. The enzyme catalyses Release of an N-terminal amino acid, Xaa-|-Yaa-, in which Xaa is preferably Leu, but may be other amino acids including Pro although not Arg or Lys, and Yaa may be Pro. Amino acid amides and methyl esters are also readily hydrolyzed, but rates on arylamides are exceedingly low.. It carries out the reaction Release of an N-terminal amino acid, preferentially leucine, but not glutamic or aspartic acids.. In terms of biological role, presumably involved in the processing and regular turnover of intracellular proteins. Catalyzes the removal of unsubstituted N-terminal amino acids from various peptides. In Streptomyces coelicolor (strain ATCC BAA-471 / A3(2) / M145), this protein is Probable cytosol aminopeptidase.